Here is a 365-residue protein sequence, read N- to C-terminus: Leu/Ile/Val/Thr-binding protein (365 aa).

The signal sequence occupies residues 1 to 21 (MKGKTLLAGCIALSLSHMAFA). Residues Cys74 and Cys99 are joined by a disulfide bond.

Belongs to the leucine-binding protein family.

It localises to the periplasm. Its function is as follows. This protein is a component of the leucine, isoleucine, valine, threonine transport system, which is one of the two periplasmic binding protein-dependent transport systems of the high-affinity transport of the branched-chain amino acids. This is Leu/Ile/Val/Thr-binding protein (livJ) from Salmonella typhimurium (strain LT2 / SGSC1412 / ATCC 700720).